Reading from the N-terminus, the 855-residue chain is E3 ubiquitin-protein ligase TRIM71 (855 aa).

Ala2 carries the N-acetylalanine modification. The RING-type zinc finger occupies 12–94 (CLLCKEMCGS…ALKLRCPVCD (83 aa)). Residues 26 to 42 (SSSSSASSSSSQTSTSS) are compositionally biased toward low complexity. Disordered regions lie at residues 26–48 (SSSSSASSSSSQTSTSSAGGGGP) and 126–177 (ADEP…SPGS). The segment covering 135 to 145 (RAGGGPGGAGG) has biased composition (gly residues). A compositionally biased stretch (basic residues) spans 147-157 (SNHRHHAHHPA). The B box-type 1; atypical zinc finger occupies 181–228 (RRPHGCSSCDEGNAASSRCLDCQEHLCDNCVRAHQRVRLTKDHYIERG). Residues 260 to 301 (ERLGFCQHHDDEVLHLYCDTCSVPICRECTLGRHGGHSFAYL) form a B box-type 2 zinc finger. Zn(2+) contacts are provided by Cys265, His268, Cys288, and His293. Positions 378-414 (QVKAKSLYLQVEKLRQNLNKLESTISAVQQVLEEGRA) form a coiled coil. One copy of the Filamin repeat lies at 466–567 (SSGAFAPLTK…IENSPFKVVV (102 aa)). NHL repeat units lie at residues 580-623 (VLSF…FKPC), 627-670 (HHKF…FTFE), 674-717 (LLKF…FGPD), 721-764 (LNKY…IHPD), 768-811 (ARFL…FEAN), and 815-855 (LCKF…ILIF).

This sequence belongs to the TRIM/RBCC family. In terms of assembly, interacts (via NHL repeats) with AGO2; the interaction increases in presence of RNA. Interacts with HSP90AA1. Interacts (via NHL repeats) with MOV10, PABPC1, PUM1, PUM2, STAU2, XRN1 and XRN2 in an RNA-dependent manner. Interacts with SHCBP1; leading to enhance its stability. Autoubiquitinated.

It localises to the cytoplasm. It is found in the P-body. The enzyme catalyses S-ubiquitinyl-[E2 ubiquitin-conjugating enzyme]-L-cysteine + [acceptor protein]-L-lysine = [E2 ubiquitin-conjugating enzyme]-L-cysteine + N(6)-ubiquitinyl-[acceptor protein]-L-lysine.. The protein operates within protein modification; protein ubiquitination. In terms of biological role, E3 ubiquitin-protein ligase that cooperates with the microRNAs (miRNAs) machinery and promotes embryonic stem cells proliferation and maintenance. Binds to miRNAs and associates with AGO2, participating in post-transcriptional repression of transcripts such as CDKN1A. In addition, participates in post-transcriptional mRNA repression in a miRNA independent mechanism. Facilitates the G1-S transition to promote rapid embryonic stem cell self-renewal by repressing CDKN1A expression. Required to maintain proliferation and prevent premature differentiation of neural progenitor cells during early neural development: positively regulates FGF signaling by controlling the stability of SHCBP1. Specific regulator of miRNA biogenesis. Binds to miRNA MIR29A hairpin and postranscriptionally modulates MIR29A levels, which indirectly regulates TET proteins expression. In Rattus norvegicus (Rat), this protein is E3 ubiquitin-protein ligase TRIM71 (Trim71).